The primary structure comprises 342 residues: Oxygen-dependent coproporphyrinogen-III oxidase (342 aa).

Residue Ser98 participates in substrate binding. 2 residues coordinate a divalent metal cation: His102 and His112. His112 acts as the Proton donor in catalysis. Asn114–Arg116 provides a ligand contact to substrate. Positions 146 and 176 each coordinate a divalent metal cation. The segment at Tyr266–Glu301 is important for dimerization.

It belongs to the aerobic coproporphyrinogen-III oxidase family. As to quaternary structure, homodimer. It depends on a divalent metal cation as a cofactor.

The protein localises to the cytoplasm. It catalyses the reaction coproporphyrinogen III + O2 + 2 H(+) = protoporphyrinogen IX + 2 CO2 + 2 H2O. Its pathway is porphyrin-containing compound metabolism; protoporphyrin-IX biosynthesis; protoporphyrinogen-IX from coproporphyrinogen-III (O2 route): step 1/1. Its function is as follows. Involved in the heme and chlorophyll biosynthesis. Catalyzes the aerobic oxidative decarboxylation of propionate groups of rings A and B of coproporphyrinogen-III to yield the vinyl groups in protoporphyrinogen-IX. The sequence is that of Oxygen-dependent coproporphyrinogen-III oxidase from Prochlorococcus marinus (strain MIT 9301).